Reading from the N-terminus, the 407-residue chain is UPF0597 protein NAMH_0191 (407 aa).

It belongs to the UPF0597 family.

The chain is UPF0597 protein NAMH_0191 from Nautilia profundicola (strain ATCC BAA-1463 / DSM 18972 / AmH).